The sequence spans 1104 residues: SWI/SNF complex subunit SMARCC1 (1104 aa).

The segment at 27 to 301 (LAVYRRKDGG…PVSFRQRIST (275 aa)) is marR-like, BRCT and chromo domains module. In terms of domain architecture, MarR-like spans 37–163 (PASKFWESPD…IEKTLVQNNC (127 aa)). The region spanning 167–210 (PNIYLIPDIDLKLANKLKDIIKRHQGTFTDEKSKASHHIYPYPS) is the BRCT; N-terminus domain. K178 is covalently cross-linked (Glycyl lysine isopeptide (Lys-Gly) (interchain with G-Cter in SUMO2)). The region spanning 216–244 (EWLRPVMRRDKQVLVHWGFYPDSYDTWVH) is the Chromo domain. Residues 260–284 (KPWKVHVKWILDTDVFNEWMNEEDY) form the BRCT; C-terminus domain. The segment at 295–445 (FRQRISTKNE…PGEDNVTEQT (151 aa)) is disordered. A compositionally biased stretch (basic and acidic residues) spans 301–317 (TKNEEPVRSPERRDRKA). Phosphoserine occurs at positions 309, 327, and 329. T334 is subject to Phosphothreonine. K344 and K345 each carry N6-acetyllysine. S349 is modified (phosphoserine). K353 carries the N6-acetyllysine modification. Phosphoserine is present on S356. K358 carries the post-translational modification N6-acetyllysine; alternate. Residue K358 forms a Glycyl lysine isopeptide (Lys-Gly) (interchain with G-Cter in SUMO2); alternate linkage. T397 carries the post-translational modification Phosphothreonine. Residues 448–545 (IIIPSYASWF…YQVDPESRPM (98 aa)) form the SWIRM domain. Position 572 is a phosphoserine (S572). Residue K591 forms a Glycyl lysine isopeptide (Lys-Gly) (interchain with G-Cter in SUMO2) linkage. One can recognise an SANT domain in the interval 617 to 668 (SAGREWTEQETLLLLEALEMYKDDWNKVSEHVGSRTQDECILHFLRLPIEDP). A Glycyl lysine isopeptide (Lys-Gly) (interchain with G-Cter in SUMO2) cross-link involves residue K738. The disordered stretch occupies residues 744–859 (ARASGKVDPT…DAGKKKVEHE (116 aa)). S775 is subject to Phosphoserine. Residues 775-784 (SEEEKMETDP) show a composition bias toward acidic residues. Basic and acidic residues predominate over residues 788–859 (QPEKAENKVE…DAGKKKVEHE (72 aa)). K795 participates in a covalent cross-link: Glycyl lysine isopeptide (Lys-Gly) (interchain with G-Cter in SUMO2). A phosphoserine mark is found at S821 and S824. Glycyl lysine isopeptide (Lys-Gly) (interchain with G-Cter in SUMO2) cross-links involve residues K828 and K855. Residues 909 to 945 (KLRHFEELETIMDREKEALEQQRQQLLTERQNFHMEQ) adopt a coiled-coil conformation. Position 947 is an N6-acetyllysine (K947). Disordered regions lie at residues 955 to 1021 (QQME…PGPG) and 1041 to 1104 (IHPT…SATP). A compositionally biased stretch (low complexity) spans 956-973 (QMEQQQQHGQTPQQAHQH). 2 stretches are compositionally biased toward pro residues: residues 994-1017 (QQPP…PGQI) and 1048-1057 (PTPPGMPPMP). The residue at position 1064 (R1064) is an Asymmetric dimethylarginine. Residues 1073–1104 (MYPPPPQQQQPPPPADGVPPPPAPGPPASATP) are compositionally biased toward pro residues.

The protein belongs to the SMARCC family. In terms of assembly, component of the multiprotein chromatin-remodeling complexes SWI/SNF: SWI/SNF-A (BAF), SWI/SNF-B (PBAF) and related complexes. The canonical complex contains a catalytic subunit (either SMARCA4/BRG1/BAF190A or SMARCA2/BRM/BAF190B) and at least SMARCE1, ACTL6A/BAF53, SMARCC1/BAF155, SMARCC2/BAF170, and SMARCB1/SNF5/BAF47. Other subunits specific to each of the complexes may also be present permitting several possible combinations developmentally and tissue specific. Component of the BAF complex, which includes at least actin (ACTB), ARID1A/BAF250A, ARID1B/BAF250B, SMARCA2/BRM, SMARCA4/BRG1, ACTL6A/BAF53, ACTL6B/BAF53B, SMARCE1/BAF57, SMARCC1/BAF155, SMARCC2/BAF170, SMARCB1/SNF5/INI1, and one or more SMARCD1/BAF60A, SMARCD2/BAF60B, or SMARCD3/BAF60C. In muscle cells, the BAF complex also contains DPF3. Component of neural progenitors-specific chromatin remodeling complex (npBAF complex) composed of at least, ARID1A/BAF250A or ARID1B/BAF250B, SMARCD1/BAF60A, SMARCD3/BAF60C, SMARCA2/BRM/BAF190B, SMARCA4/BRG1/BAF190A, SMARCB1/BAF47, SMARCC1/BAF155, SMARCE1/BAF57, SMARCC2/BAF170, PHF10/BAF45A, ACTL6A/BAF53A and actin. Component of neuron-specific chromatin remodeling complex (nBAF complex) composed of at least, ARID1A/BAF250A or ARID1B/BAF250B, SMARCD1/BAF60A, SMARCD3/BAF60C, SMARCA2/BRM/BAF190B, SMARCA4/BRG1/BAF190A, SMARCB1/BAF47, SMARCC1/BAF155, SMARCE1/BAF57, SMARCC2/BAF170, DPF1/BAF45B, DPF3/BAF45C, ACTL6B/BAF53B and actin. Component of the SWI/SNF-B (PBAF) chromatin remodeling complex, at least composed of SMARCA4/BRG1, SMARCB1/BAF47/SNF5, ACTL6A/BAF53A or ACTL6B/BAF53B, SMARCE1/BAF57, SMARCD1/BAF60A, SMARCD2/BAF60B, perhaps SMARCD3/BAF60C, SMARCC1/BAF155, SMARCC2/BAF170, PBRM1/BAF180, ARID2/BAF200 and actin. Component of SWI/SNF (GBAF) subcomplex, which includes at least BICRA or BICRAL (mutually exclusive), BRD9, SS18, SMARCA2/BRM, SMARCA4/BRG1/BAF190A, ACTL6A/BAF53, SMARCC1/BAF155, and SMARCD1/BAF60A. May also interact with the SIN3A histone deacetylase transcription repressor complex in conjunction with SMARCA2 and SMARCA4. The minimal complex composed of SMARCC1 and SMARCA4 seems to be able to associate with cyclin such as CCNE1 or transcription factors such as KLF1 or GATA1. Interacts with NR3C1 and SMARD1. Interacts with TRIP12; leading to disrupt interaction between TRIP12 and SMARCE1 and prevent SMARCE1 ubiquitination. Interacts with CEBPB (when not methylated). Interacts with KDM6B. Interacts with MKKS; the interaction takes place predominantly in the cytoplasm and may modulate SMARCC1 location. Interacts with DPF2. Interacts with PRDM1/BLIMP1. Interacts with DPF3a (isoform 2 of DPF3/BAF45C) and with HDGFL2 in a DPF3a-dependent manner. As to expression, highly expressed in adult brain, testis and thymus.

The protein resides in the nucleus. It is found in the cytoplasm. Functionally, involved in transcriptional activation and repression of select genes by chromatin remodeling (alteration of DNA-nucleosome topology). Component of SWI/SNF chromatin remodeling complexes that carry out key enzymatic activities, changing chromatin structure by altering DNA-histone contacts within a nucleosome in an ATP-dependent manner. May stimulate the ATPase activity of the catalytic subunit of the complex. Belongs to the neural progenitors-specific chromatin remodeling complex (npBAF complex) and the neuron-specific chromatin remodeling complex (nBAF complex). During neural development a switch from a stem/progenitor to a postmitotic chromatin remodeling mechanism occurs as neurons exit the cell cycle and become committed to their adult state. The transition from proliferating neural stem/progenitor cells to postmitotic neurons requires a switch in subunit composition of the npBAF and nBAF complexes. As neural progenitors exit mitosis and differentiate into neurons, npBAF complexes which contain ACTL6A/BAF53A and PHF10/BAF45A, are exchanged for homologous alternative ACTL6B/BAF53B and DPF1/BAF45B or DPF3/BAF45C subunits in neuron-specific complexes (nBAF). The npBAF complex is essential for the self-renewal/proliferative capacity of the multipotent neural stem cells. The nBAF complex along with CREST plays a role regulating the activity of genes essential for dendrite growth. This chain is SWI/SNF complex subunit SMARCC1 (Smarcc1), found in Mus musculus (Mouse).